We begin with the raw amino-acid sequence, 231 residues long: SrfA-induced gene F protein (231 aa).

The chain is SrfA-induced gene F protein (sigF) from Dictyostelium discoideum (Social amoeba).